Consider the following 311-residue polypeptide: Thioredoxin reductase (311 aa).

FAD-binding positions include phenylalanine 31–glutamine 39 and glutamate 32–glutamine 39. Residues cysteine 133 and cysteine 136 are joined by a disulfide bond. Aspartate 281–valine 290 serves as a coordination point for FAD.

The protein belongs to the class-II pyridine nucleotide-disulfide oxidoreductase family. In terms of assembly, homodimer. It depends on FAD as a cofactor.

It is found in the cytoplasm. It catalyses the reaction [thioredoxin]-dithiol + NADP(+) = [thioredoxin]-disulfide + NADPH + H(+). This Helicobacter pylori (strain J99 / ATCC 700824) (Campylobacter pylori J99) protein is Thioredoxin reductase (trxB).